Reading from the N-terminus, the 243-residue chain is Orotidine 5'-phosphate decarboxylase (243 aa).

Residues Asp-16, Lys-38, 65-74 (DLKLHDIPNT), Thr-120, Arg-181, Gln-190, Gly-210, and Arg-211 contribute to the substrate site. Catalysis depends on Lys-67, which acts as the Proton donor.

The protein belongs to the OMP decarboxylase family. Type 1 subfamily. In terms of assembly, homodimer.

The catalysed reaction is orotidine 5'-phosphate + H(+) = UMP + CO2. It participates in pyrimidine metabolism; UMP biosynthesis via de novo pathway; UMP from orotate: step 2/2. In terms of biological role, catalyzes the decarboxylation of orotidine 5'-monophosphate (OMP) to uridine 5'-monophosphate (UMP). The polypeptide is Orotidine 5'-phosphate decarboxylase (Bradyrhizobium sp. (strain ORS 278)).